The following is a 132-amino-acid chain: N,N-dimethylformamidase alpha subunit (132 aa).

As to quaternary structure, heterotetramer of two DmfA1 (alpha) and two DmfA2 (beta) subunits.

The enzyme catalyses N,N-dimethylformamide + H2O = dimethylamine + formate. With respect to regulation, activity is slightly inhibited by Mg(2+) and Mn(2+), and slightly increased by Cu(2+). Activity is slightly inhibited by the chelating agents 8-hydroxyquinoline, ethylenediaminetetraacetate, o-phenanthroline and 2,2'-bipyridyl. Hydrolyzes N,N-dimethylformamide, and to a lesser extent N,N-dimethylacetamide and N,N-diethylacetamide. Has no activity against the substituted amides N-methylformamide, N-ethylformamide, N-ethylformamide and N-methylacetamide or the unsubstituted amides formamide, nicotinamide, acetoamide, benzamide, acetamide and acrylamide. This chain is N,N-dimethylformamidase alpha subunit, found in Alcaligenes sp.